The chain runs to 179 residues: Transthyretin-like protein 46 (179 aa).

A signal peptide spans 1–17; sequence MNKLFVLLIALLGLTAA. A disordered region spans residues 144 to 179; that stretch reads RRGGFNADYMDPDNSEKDQSKSSEESEDKEKTVETF. Residues 157-179 show a composition bias toward basic and acidic residues; the sequence is NSEKDQSKSSEESEDKEKTVETF.

It belongs to the nematode transthyretin-like family.

The protein resides in the secreted. The polypeptide is Transthyretin-like protein 46 (ttr-46) (Caenorhabditis elegans).